The primary structure comprises 269 residues: NAD kinase (269 aa).

The Proton acceptor role is filled by aspartate 45. NAD(+) is bound by residues 45-46 (DG), 122-123 (NE), arginine 149, aspartate 151, and alanine 186.

It belongs to the NAD kinase family. The cofactor is a divalent metal cation.

It localises to the cytoplasm. It carries out the reaction NAD(+) + ATP = ADP + NADP(+) + H(+). Its function is as follows. Involved in the regulation of the intracellular balance of NAD and NADP, and is a key enzyme in the biosynthesis of NADP. Catalyzes specifically the phosphorylation on 2'-hydroxyl of the adenosine moiety of NAD to yield NADP. This Staphylococcus epidermidis (strain ATCC 35984 / DSM 28319 / BCRC 17069 / CCUG 31568 / BM 3577 / RP62A) protein is NAD kinase.